The primary structure comprises 30 residues: Hementerin (30 aa).

It depends on Ca(2+) as a cofactor.

The protein resides in the secreted. With respect to regulation, fibrino(geno)lytic activity inhibited by EDTA but not by PMSF, E-64, 6-AHA and aprotinin. Its function is as follows. Cleaves fibrinogen Aalpha (FGA), gamma (FGG) and Bbeta (FGB) chains. Degrades cross-linked fibrin. Has no amidolytic, plasminogenolytic or caseinolytic activity. Inhibits platelet aggregation induced by collagen (IC(50)=7.5ug/ml) and various other agonists, presumably via activation of a nitridergic pathway. Inhibition is accompanied by reduced ATP release from and surface expression of SELP and CD63 on platelets as well as increased intracellular levels of Ca(2+), cGMP and nitric oxide synthase activity. This is Hementerin from Haementeria depressa (Leech).